The sequence spans 225 residues: UPF0758 protein Sez_1052 (225 aa).

In terms of domain architecture, MPN spans 102-224; it reads PVLSSAQVAE…YYSFREKSDL (123 aa). His173, His175, and Asp186 together coordinate Zn(2+). A JAMM motif motif is present at residues 173–186; that stretch reads HNHPSGLTKPSAND.

The protein belongs to the UPF0758 family.

The protein is UPF0758 protein Sez_1052 of Streptococcus equi subsp. zooepidemicus (strain MGCS10565).